We begin with the raw amino-acid sequence, 201 residues long: Molybdenum cofactor guanylyltransferase (201 aa).

Residues 15–17 (LCG), Lys-28, Asp-74, and Asp-104 contribute to the GTP site. Asp-104 provides a ligand contact to Mg(2+).

Belongs to the MobA family. As to quaternary structure, monomer. Mg(2+) serves as cofactor.

It localises to the cytoplasm. The catalysed reaction is Mo-molybdopterin + GTP + H(+) = Mo-molybdopterin guanine dinucleotide + diphosphate. Transfers a GMP moiety from GTP to Mo-molybdopterin (Mo-MPT) cofactor (Moco or molybdenum cofactor) to form Mo-molybdopterin guanine dinucleotide (Mo-MGD) cofactor. The sequence is that of Molybdenum cofactor guanylyltransferase from Ectopseudomonas mendocina (strain ymp) (Pseudomonas mendocina).